Reading from the N-terminus, the 249-residue chain is Aquaporin TIP4-3 (249 aa).

Helical transmembrane passes span 20-40 (GVLGELVLTFLFVFIGVGAAM) and 56-76 (TAVALGQALVVAVIATAGFHI). An NPA 1 motif is present at residues 82–84 (NPA). Transmembrane regions (helical) follow at residues 100 to 122 (SSLYIAAQMLASSAACFLLRWLT), 141 to 161 (GVVAEAVFTFSLLFVIYATIL), and 169 to 189 (GAGPLLTGLLVGANSVAGAAL). The NPA 2 motif lies at 195–197 (NPA). A helical transmembrane segment spans residues 214–234 (VYWVGPLAGGPLAVLVYECCF).

The protein belongs to the MIP/aquaporin (TC 1.A.8) family. TIP (TC 1.A.8.10) subfamily.

It localises to the vacuole membrane. Functionally, aquaporins facilitate the transport of water and small neutral solutes across cell membranes. In Zea mays (Maize), this protein is Aquaporin TIP4-3 (TIP4-3).